The following is a 1025-amino-acid chain: Rho GTPase-activating protein Graf (1025 aa).

A PH domain is found at 271 to 388 (IFTKRGYLFL…WISAMDGTEP (118 aa)). The Rho-GAP domain occupies 402–589 (YHLDEAGFMF…ILIDNYERIF (188 aa)). The tract at residues 824-866 (GSASGPQQHPPVQRGLHSYGQTKHYSPLMPTSTSSSNDSVCDS) is disordered. Positions 854–866 (TSTSSSNDSVCDS) are enriched in low complexity. The SH3 domain occupies 963 to 1023 (TGTARVRTLY…PENYVEHLKP (61 aa)).

As to quaternary structure, interacts with Egfr (when ubiquitinated). In terms of tissue distribution, in the adult brain, expressed in the antennal lobe, the subesophageal ganglion and the alpha/beta neurons of the mushroom body.

The protein resides in the cytoplasm. It is found in the cytosol. The protein localises to the cytoplasmic vesicle. Functionally, GTPase-activating protein for Rho family proteins. Essential component of the CLIC (clathrin-independent carrier)/GEEC (GPI-anchored protein-enriched early endocytic compartment) endocytic pathway. During hematopoiesis, inhibits Egfr-ras-MAPK signaling by promoting Spi-induced Egfr internalization through CLIC/GEEC endocytosis, thereby preventing plasmatocyte overproliferation. Essential for normal mushroom body (MB) development and consequently the formation of olfactory long-term memories. During MD development, required to stop the MB beta-lobe from crossing the brain midline, possibly acting via its role in the CLIC/GEEC endocytic pathway to down-regulate the Egfr-ras-MAPK signaling at the tip of the beta-lobes. Required during embryo cellularization for maintaining and regulating the rate of actomyosin ring constriction. During cellularization, inhibits Rho-GTP levels at the furrow canal tip in a spatiotemporal manner, thus delaying the onset of actomyosin contraction and ensuring appropriate closure of the cells at the base of nuclei after membrane extension. The chain is Rho GTPase-activating protein Graf from Drosophila melanogaster (Fruit fly).